Reading from the N-terminus, the 416-residue chain is Calreticulin (416 aa).

Positions 1–25 are cleaved as a signal peptide; it reads MENRGRNPSFLSLLLLLSLFAIASA. A glycan (N-linked (GlcNAc...) asparagine) is linked at N57. Cysteines 111 and 143 form a disulfide. 4 residues coordinate an alpha-D-glucoside: Y115, K117, Y134, and D141. N157 carries N-linked (GlcNAc...) asparagine glycosylation. A run of 7 repeats spans residues 197 to 208, 216 to 227, 233 to 244, 251 to 262, 266 to 276, 280 to 290, and 294 to 304. Positions 197 to 262 are 4 X approximate repeats; the sequence is KQTGSLYTDW…EAKKPEDWDD (66 aa). A compositionally biased stretch (basic and acidic residues) spans 217 to 241; it reads PEAKKPEDWDDKEFIPDPEDKKPEG. The interval 217–281 is disordered; it reads PEAKKPEDWD…TIPNPEYKGP (65 aa). The tract at residues 266 to 304 is 3 X approximate repeats; that stretch reads GEWTAPTIPNPEYKGPWKAKKIKNPNYKGKWKAPMIDNP. E324 provides a ligand contact to an alpha-D-glucoside. Over residues 351–381 the composition is skewed to basic and acidic residues; sequence EETWGKQKDAEKAAFEELEKKREEEETKDDP. Positions 351–416 are disordered; it reads EETWGKQKDA…DKDDDQHDEL (66 aa). Residues 382 to 400 show a composition bias toward acidic residues; it reads VESDAEDEDEAEADDSDKD. Positions 401-416 are enriched in basic and acidic residues; that stretch reads DADKSDDKDDDQHDEL. The Prevents secretion from ER signature appears at 413–416; it reads HDEL.

It belongs to the calreticulin family.

It is found in the endoplasmic reticulum lumen. Molecular calcium-binding chaperone promoting folding, oligomeric assembly and quality control in the ER via the calreticulin/calnexin cycle. This lectin may interact transiently with almost all of the monoglucosylated glycoproteins that are synthesized in the ER. In Beta vulgaris (Sugar beet), this protein is Calreticulin.